The chain runs to 451 residues: MREIVHIQGGQCGDQIGAKFWEVISDEHGIDPTGTYNGDSDLQLERVNVYYNEATGGRYVPRAVLMDLEPGTMDSVRAGPYGQLFRPDNFVFGQTGAGNNWAKGHYTEGAELIDSVLDVVRKEAEQCDCLQGFQVTHSLGGGTGSGMGTLLISKIREEYPDRVMMTFSVCPSPKVSDTVVEPYNATLSVHQLVENADEVMVLDNEALYDICFRTLKLTTPTYGDLNHLVCVCMSGVTSSLRFPGQLNADLRKLAVNLIPFPRLHFFMLGFAPLTSRGSQQYRALTVPELTSQCFDAKNMMCAADPRHGRYLTASCMFRGRMSTKEVDEQMLNVQNKNSSYFVEWIPNNIKSSVCDIPPKGLKMSATFVGNSTAIQEMFKRVGEQFTAMFRRKAFLHWYTGEGMDEMEFTEAESNMNDLVSEYQQYQDATAEEEGEYDEDDGGYGDEDDGMM.

Positions 11, 69, 138, 142, 143, 144, 204, and 226 each coordinate GTP. Residue glutamate 69 coordinates Mg(2+). The span at 417 to 427 shows a compositional bias: polar residues; it reads DLVSEYQQYQD. Residues 417-451 form a disordered region; it reads DLVSEYQQYQDATAEEEGEYDEDDGGYGDEDDGMM. Residues 429 to 451 are compositionally biased toward acidic residues; it reads TAEEEGEYDEDDGGYGDEDDGMM.

It belongs to the tubulin family. As to quaternary structure, dimer of alpha and beta chains. A typical microtubule is a hollow water-filled tube with an outer diameter of 25 nm and an inner diameter of 15 nM. Alpha-beta heterodimers associate head-to-tail to form protofilaments running lengthwise along the microtubule wall with the beta-tubulin subunit facing the microtubule plus end conferring a structural polarity. Microtubules usually have 13 protofilaments but different protofilament numbers can be found in some organisms and specialized cells. It depends on Mg(2+) as a cofactor.

The protein localises to the cytoplasm. It is found in the cytoskeleton. Tubulin is the major constituent of microtubules, a cylinder consisting of laterally associated linear protofilaments composed of alpha- and beta-tubulin heterodimers. Microtubules grow by the addition of GTP-tubulin dimers to the microtubule end, where a stabilizing cap forms. Below the cap, tubulin dimers are in GDP-bound state, owing to GTPase activity of alpha-tubulin. The sequence is that of Tubulin beta-4 chain (TUBB4) from Oomycete-like sp. (strain MacKay2000).